Reading from the N-terminus, the 262-residue chain is MQTIICVEQLSKTFNQHQALHAVDLNIHHGEMVALLGPSGSGKSTLLRHLSGLITGDKSAGSHIELLGRTVQREGRLARDIRKSRANTGYIFQQFNLVNRLSVLENVLIGALGSTPFWRTCFSWFTREQKQRALQALTRVGMAHFAYQRVSTLSGGQQQRVAIARALMQQAKVILADEPIASLDPESARIVMDTLRDINQNDGITVVVTLHQVDYALRYCERIVALRQGHVFYDGSSQQFDNERFDHLYRSINRVEENAKAA.

The 249-residue stretch at 5-253 (ICVEQLSKTF…RFDHLYRSIN (249 aa)) folds into the ABC transporter domain. 37 to 44 (GPSGSGKS) contacts ATP.

Belongs to the ABC transporter superfamily. Phosphonates importer (TC 3.A.1.9.1) family. As to quaternary structure, the complex is composed of two ATP-binding proteins (PhnC), two transmembrane proteins (PhnE) and a solute-binding protein (PhnD).

The protein resides in the cell inner membrane. The enzyme catalyses phosphonate(out) + ATP + H2O = phosphonate(in) + ADP + phosphate + H(+). Its function is as follows. Part of the ABC transporter complex PhnCDE involved in phosphonates import. Responsible for energy coupling to the transport system. This chain is Phosphonates import ATP-binding protein PhnC, found in Escherichia coli O157:H7.